The following is a 479-amino-acid chain: MGQLLPKYNILTEDQVQKIHENTMKILEEIGIEFEYEPALEVFRREGQKVEGKRVYLTREFVESKLKSAPAEFTLHARNPENNVVIGGDNIVFMPGYGAPFIYELDGSRRKTTLQDYENFAKLAGASKNMHLSGGTMAEPQDIPDGVRHLQMLYSSIKNSDKCFMGSAEGKERAEDSVEIAAILFGGKDVIKEKPVLVSLINSLTPLKYDERMLGALMAYAEAGQAVIIASLVMAGSTGPASLAGTLSLQNAEVLAGISLAQSINPGTPVIYGSTSALSDMRSGSLSIGSPECALFISASAQLARFYGVPSRSGGGLNDSKTVDAQAGYESMMTLMAANLTGVNFVLHTAGILQYFMAMSYEKFIMDDEIAGMLLHYMKGYTFDEDGMAFDVIEKVGPGGHFLTQKHTRKNHKREFYTPTLSDRSAYDTWAKEKLETKQRAHARWQQILANYVPPALDPEIDAKLQAFIAQRGKEVGEE.

It belongs to the trimethylamine methyltransferase family.

The catalysed reaction is Co(I)-[glycine betaine-specific corrinoid protein] + glycine betaine + H(+) = methyl-Co(III)-[glycine betaine-specific corrinoid protein] + N,N-dimethylglycine. Functionally, methyltransferase able to methylate free cob(I)alamin in vitro, using glycine betaine as the methyl donor, yealding methylcobalamin (methylCbl) and dimethylglycine. In vivo, probably carries out the methylation of a corrinoid protein, likely the adjacently encoded DSY3155, with glycine betaine, to then supply methyl groups to tetrahydrofolate (THF) for ultimate conversion to carbon dioxide; oxidation of the methyl group would also provide reducing equivalents for anaerobic respiration. Thus, may function in the pathway that allows anaerobic methylotrophic growth of D.hafniense using glycine betaine. Cannot use quaternary amines such as carnitine and choline as substrates, nor tertiary amines such as dimethylglycine or trimethylamine. This chain is Glycine betaine methyltransferase, found in Desulfitobacterium hafniense (strain Y51).